A 415-amino-acid chain; its full sequence is Queuine tRNA-ribosyltransferase accessory subunit 2 (415 aa).

Zn(2+) is bound by residues Cys351, Cys353, Cys356, and His382.

The protein belongs to the queuine tRNA-ribosyltransferase family. QTRT2 subfamily. Heterodimer of a catalytic subunit qtrt1 and an accessory subunit qtrt2. Zn(2+) is required as a cofactor.

The protein localises to the cytoplasm. Its subcellular location is the mitochondrion outer membrane. Functionally, non-catalytic subunit of the queuine tRNA-ribosyltransferase (TGT) that catalyzes the base-exchange of a guanine (G) residue with queuine (Q) at position 34 (anticodon wobble position) in tRNAs with GU(N) anticodons (tRNA-Asp, -Asn, -His and -Tyr), resulting in the hypermodified nucleoside queuosine (7-(((4,5-cis-dihydroxy-2-cyclopenten-1-yl)amino)methyl)-7-deazaguanosine). The chain is Queuine tRNA-ribosyltransferase accessory subunit 2 from Xenopus laevis (African clawed frog).